A 901-amino-acid polypeptide reads, in one-letter code: MGAASCEDEELEFKLVFGEEKEAPPLGPGGPGEELDSEDAPPCCRLALGEPLPYGAAPIGIPRPPPPRPGMHSPPPRPAPSPGTWESQPPRSVRLGGPGGTAGGTGGGRVLECPSIRITSISPTPDPPTSLEDAPETWGDGSPRDYPPPEGFGGYREAGGQGGGAFFSPSPGSSSLSSWSFFSDASDEAALYAACDEVESELNEAASRFGLSSPLPSPRASPRPWTPEDPWSLYGPSSGGRAPEDSWLLLSAPGPIPASPRPASPCGKRRYSSSGTPSSASPALSRRGSLGEEGPEPPPPPPLPLVRDPSSSGPFDYVGAPPTESVPQKTRRTSSEQAVALPRSEEPASCNGKLPSGTEDSVAAPGALRKEMAGMDYLAVPSPLAWSKARIGGHSPIFRTSALPPLDWPLPSQYEQLELRIEVQPRAHHRAHYETEGSRGAVKAAPGGHPVVKLLGYNEKPLTLQMFIGTADERSLRPHAFYQVHRITGKMVATASYEAVVSGTKVLEMTLLPENNMAANIDCAGILKLRNSDIELRKGETDIGRKNTRVRLVFRVHVPQGGGKVVSVQAASVPIECSQRSAQELPQVEAYSPSACSVRGGEELVLTGSNFLPDSKVVFIERGPDGKLQWEEEAAVNRLQSSEVTLTLTIPEYSNKRVSRPVQVYFYVSNGRRKRSPTQSFKFLPVIFKEEPLPDSSLRGFPSTSGPPFGPDMDFSPPRPPYPSYPHEDPAYETPYLSEGFGYSTPALYPQTGPPPSYRSGLRMFPETGGTTGCARLPSVSFLPRPFPGDQYGGQGSSFPLGLPFSPPAPFRPPLPSSPPLEDPFNPQSAVHPLPAEGYNEVGPGYTPGEGASEQEKSRGGYGSGFRDNVPIQGITLEEVSEIIGRDLSGFPARPGEEPPA.

The span at methionine 1–leucine 11 shows a compositional bias: acidic residues. Disordered regions lie at residues methionine 1–serine 180 and asparagine 203–serine 361. Residues isoleucine 61 to serine 81 are compositionally biased toward pro residues. Residues glycine 96–arginine 109 are compositionally biased toward gly residues. The tract at residues proline 114–threonine 119 is calcineurin-binding. Positions proline 114–proline 123 are enriched in low complexity. Positions glycine 151–alanine 165 are enriched in gly residues. The segment covering phenylalanine 166–serine 180 has biased composition (low complexity). A phosphoserine mark is found at serine 168, serine 170, serine 213, and serine 217. Residues serine 213–aspartate 229 form an SP 1 repeat. The interval serine 213–glutamate 293 is 2 approximate SP repeats. Composition is skewed to pro residues over residues leucine 215 to proline 227 and glycine 254 to alanine 263. Positions lysine 268–arginine 270 match the Nuclear localization signal motif. Residues serine 272 to glycine 288 are compositionally biased toward low complexity. One copy of the SP 2; approximate repeat lies at proline 277 to glutamate 293. Serine 289, serine 334, and serine 344 each carry phosphoserine. The region spanning serine 401 to alanine 582 is the RHD domain. A DNA-binding region spans residues arginine 430 to glycine 437. The IPT/TIG domain maps to proline 586–phenylalanine 683. Residues arginine 672 to lysine 674 carry the Nuclear localization signal motif. A Glycyl lysine isopeptide (Lys-Gly) (interchain with G-Cter in SUMO2) cross-link involves residue lysine 689. Disordered regions lie at residues serine 697–proline 721 and glutamine 791–aspartate 868. Positions phenylalanine 805 to glutamate 822 are enriched in pro residues.

As to quaternary structure, member of the multicomponent NFATC transcription complex that consists of at least two components, a pre-existing cytoplasmic component NFATC2 and an inducible nuclear component NFATC1. Other NFAT proteins, such as NFATC4, NFATC3, or members of the activating protein-1 (AP-1) family and MAF can also bind the complex. NFAT proteins can bind DNA as monomers or dimers. Component of a promoter-binding complex composed of STAT3, NFATC3 and NFATC4; complex formation is enhanced by calcineurin. Interacts with CREBBP; this interaction potentiates transcription activation. Interacts with MAPK8/JNK1 and MAPK9/JNK2. Interacts with GATA4 (via the second Zn finger). Interacts (via N-terminus) with IRAK1 (via C-terminus). Interacts with RPS6KA3. Interacts with HOMER1, HOMER2 and HOMER3; this interaction competes with calcineurin/PPP3CA-binding and hence prevents NFATC4 dephosphorylation and activation. Interacts with ESR1 and ESR2; this interaction decreases NFATC4 transcriptional activity. Interacts with MTOR and MAPK7/ERK5. Interacts with TRIM17; this interaction prevents NFATC3 nuclear localization. Interacts with TCF25 (via C-terminus); the interaction leads to suppression of NFATC4 transcription factor activity and is reduced following stimulation with angiotensin-2. Post-translationally, phosphorylated by NFATC-kinases; dephosphorylated by calcineurin/PPP3CA. Phosphorylated on Ser-168 and Ser-170 by MTOR, IRAK1, MAPK7/ERK5 and MAPK14/p38, on Ser-213 and Ser-217 by MAPK8 and MAPK9, and on Ser-289 and Ser-344 by RPS6KA3. Phosphorylated by GSK3B; this phosphorylation markedly increases NFATC4 ubiquitination. Phosphorylation by MAPK8/JNK1, MAPK9/JNK2 and RPS6KA3 may stimulate NFATC4 transcriptional activity. Phosphorylation at Ser-168 and Ser-170 is stimulated by UV irradiation. Ubiquitinated, leading to degradation by the proteasome. Ubiquitination may be stimulated by GSK3B-dependent phosphorylation. Polyubiquitin linkage mainly occurs through 'Lys-48'. As to expression, expressed in heart (at protein level).

The protein resides in the cytoplasm. The protein localises to the nucleus. Functionally, ca(2+)-regulated transcription factor that is involved in several processes, including the development and function of the immune, cardiovascular, musculoskeletal, and nervous systems. Involved in T-cell activation, stimulating the transcription of cytokine genes, including that of IL2 and IL4. Along with NFATC3, involved in embryonic heart development. Following JAK/STAT signaling activation and as part of a complex with NFATC3 and STAT3, binds to the alpha-beta E4 promoter region of CRYAB and activates transcription in cardiomyocytes. Involved in mitochondrial energy metabolism required for cardiac morphogenesis and function. Transactivates many genes involved in heart physiology. Along with GATA4, binds to and activates NPPB/BNP promoter. Activates NPPA/ANP/ANF and MYH7/beta-MHC transcription. Binds to and transactivates AGTR2 gene promoter. Involved in the regulation of adult hippocampal neurogenesis. Involved in BDNF-driven pro-survival signaling in hippocampal adult-born neurons. Involved in the formation of long-term spatial memory and long-term potentiation. In cochlear nucleus neurons, may play a role in deafferentation-induced apoptosis during a developmental critical period when auditory neurons depend on afferent input for survival. Binds to and activates the BACE1/Beta-secretase 1 promoter, hence may regulate the proteolytic processing of the amyloid precursor protein (APP). Plays a role in adipocyte differentiation. May be involved in myoblast differentiation into myotubes. Binds the consensus DNA sequence 5'-GGAAAAT-3'. In the presence of CREBBP, activates TNF transcription. Binds to PPARG gene promoter and regulates its activity. Binds to PPARG and REG3G gene promoters. In Rattus norvegicus (Rat), this protein is Nuclear factor of activated T-cells, cytoplasmic 4 (Nfatc4).